We begin with the raw amino-acid sequence, 464 residues long: Cerebellar degeneration-related protein 2-like (464 aa).

Coiled coils occupy residues 31 to 154 (AAEL…RRKT), 201 to 264 (VSSL…KSRV), and 342 to 379 (MSILREVDEQYHALLEKYEELLGKCRRHEESLRHAEVQ). Residues 371–419 (ESLRHAEVQTSRPVSRDPSMKECRVAEPQQPPPTPPQTPSTPEALEGIS) are disordered. Residues 384-395 (VSRDPSMKECRV) show a composition bias toward basic and acidic residues. Positions 399–409 (QQPPPTPPQTP) are enriched in pro residues.

This sequence belongs to the CDR2 family.

This Danio rerio (Zebrafish) protein is Cerebellar degeneration-related protein 2-like (cdr2l).